Consider the following 1828-residue polypeptide: Protein TIC 214 (1828 aa).

The next 6 helical transmembrane spans lie at 18 to 38 (IINS…FSIG), 64 to 84 (FITG…HLAM), 87 to 107 (PYTI…WKNH), 124 to 144 (FSIQ…HFVL), 172 to 192 (VGWL…LFWI), and 222 to 242 (VNIF…SPIL). The segment covering 270-279 (SEAKETKQEQ) has biased composition (basic and acidic residues). 4 disordered regions span residues 270–301 (SEAK…PNKL), 618–637 (DLQQ…HAIR), 741–763 (EFKT…EDKK), and 1533–1571 (KEEF…RQSK). A compositionally biased stretch (basic and acidic residues) spans 1550–1562 (KDVEKDYAKSDIK).

The protein belongs to the TIC214 family. In terms of assembly, part of the Tic complex.

It localises to the plastid. Its subcellular location is the chloroplast inner membrane. Involved in protein precursor import into chloroplasts. May be part of an intermediate translocation complex acting as a protein-conducting channel at the inner envelope. The sequence is that of Protein TIC 214 from Calycanthus floridus var. glaucus (Eastern sweetshrub).